An 851-amino-acid polypeptide reads, in one-letter code: UPF0182 protein CYA_1810 (851 aa).

The next 7 membrane-spanning stretches (helical) occupy residues 7 to 27, 47 to 67, 76 to 96, 141 to 161, 168 to 188, 220 to 240, and 259 to 279; these read GLVL…LASF, VLAR…VVGS, ASTA…AWSL, FNLV…ELGL, LALS…LFLL, LPAT…FWAL, and WASS…FGLL.

The protein belongs to the UPF0182 family.

It is found in the cell membrane. The protein is UPF0182 protein CYA_1810 of Synechococcus sp. (strain JA-3-3Ab) (Cyanobacteria bacterium Yellowstone A-Prime).